The chain runs to 204 residues: Holliday junction branch migration complex subunit RuvA (204 aa).

The interval 1–64 is domain I; sequence MIARLRGTLL…EDGQTLFGFR (64 aa). The segment at 65-143 is domain II; it reads TRAERDLFRR…GVGGGSTAAP (79 aa). The flexible linker stretch occupies residues 144–153; that stretch reads AAGADHPTGE. The domain III stretch occupies residues 153–204; the sequence is ENDPVSEAIEGLVALGYKPPEAARMARNAAEPELGCEAIIRRALQRAVPRGG.

It belongs to the RuvA family. In terms of assembly, homotetramer. Forms an RuvA(8)-RuvB(12)-Holliday junction (HJ) complex. HJ DNA is sandwiched between 2 RuvA tetramers; dsDNA enters through RuvA and exits via RuvB. An RuvB hexamer assembles on each DNA strand where it exits the tetramer. Each RuvB hexamer is contacted by two RuvA subunits (via domain III) on 2 adjacent RuvB subunits; this complex drives branch migration. In the full resolvosome a probable DNA-RuvA(4)-RuvB(12)-RuvC(2) complex forms which resolves the HJ.

It localises to the cytoplasm. Functionally, the RuvA-RuvB-RuvC complex processes Holliday junction (HJ) DNA during genetic recombination and DNA repair, while the RuvA-RuvB complex plays an important role in the rescue of blocked DNA replication forks via replication fork reversal (RFR). RuvA specifically binds to HJ cruciform DNA, conferring on it an open structure. The RuvB hexamer acts as an ATP-dependent pump, pulling dsDNA into and through the RuvAB complex. HJ branch migration allows RuvC to scan DNA until it finds its consensus sequence, where it cleaves and resolves the cruciform DNA. The sequence is that of Holliday junction branch migration complex subunit RuvA from Halorhodospira halophila (strain DSM 244 / SL1) (Ectothiorhodospira halophila (strain DSM 244 / SL1)).